The chain runs to 228 residues: ATP synthase subunit a (228 aa).

6 helical membrane passes run 19-39 (AIYI…AVAV), 81-101 (LIAT…IPGF), 107-127 (SLNL…FEGI), 136-156 (FAGF…IEVI), 178-198 (LFLL…PYAL), and 204-224 (ILQA…AVVV).

Belongs to the ATPase A chain family. In terms of assembly, F-type ATPases have 2 components, CF(1) - the catalytic core - and CF(0) - the membrane proton channel. CF(1) has five subunits: alpha(3), beta(3), gamma(1), delta(1), epsilon(1). CF(0) has three main subunits: a(1), b(2) and c(9-12). The alpha and beta chains form an alternating ring which encloses part of the gamma chain. CF(1) is attached to CF(0) by a central stalk formed by the gamma and epsilon chains, while a peripheral stalk is formed by the delta and b chains.

The protein localises to the cell inner membrane. In terms of biological role, key component of the proton channel; it plays a direct role in the translocation of protons across the membrane. This chain is ATP synthase subunit a, found in Campylobacter hominis (strain ATCC BAA-381 / DSM 21671 / CCUG 45161 / LMG 19568 / NCTC 13146 / CH001A).